We begin with the raw amino-acid sequence, 110 residues long: UPF0251 protein PH0803 (110 aa).

The protein belongs to the UPF0251 family.

This Pyrococcus horikoshii (strain ATCC 700860 / DSM 12428 / JCM 9974 / NBRC 100139 / OT-3) protein is UPF0251 protein PH0803.